Here is a 59-residue protein sequence, read N- to C-terminus: Photosystem II reaction center protein K (59 aa).

Positions 1–22 (MLNIFSLICLSSALHSSSFFFA) are excised as a propeptide. Residues 38–58 (MPVIPVLFFLLALVWQAAVSF) form a helical membrane-spanning segment.

Belongs to the PsbK family. As to quaternary structure, PSII is composed of 1 copy each of membrane proteins PsbA, PsbB, PsbC, PsbD, PsbE, PsbF, PsbH, PsbI, PsbJ, PsbK, PsbL, PsbM, PsbT, PsbX, PsbY, PsbZ, Psb30/Ycf12, at least 3 peripheral proteins of the oxygen-evolving complex and a large number of cofactors. It forms dimeric complexes.

The protein localises to the plastid. It is found in the chloroplast thylakoid membrane. In terms of biological role, one of the components of the core complex of photosystem II (PSII). PSII is a light-driven water:plastoquinone oxidoreductase that uses light energy to abstract electrons from H(2)O, generating O(2) and a proton gradient subsequently used for ATP formation. It consists of a core antenna complex that captures photons, and an electron transfer chain that converts photonic excitation into a charge separation. The chain is Photosystem II reaction center protein K from Piper cenocladum (Ant piper).